The following is a 699-amino-acid chain: Elongation factor G (699 aa).

The tr-type G domain occupies 10–292 (DRTRNIGIMA…AVIDYLPSPT (283 aa)). GTP contacts are provided by residues 19–26 (AHIDAGKT), 90–94 (DTPGH), and 144–147 (NKMD).

This sequence belongs to the TRAFAC class translation factor GTPase superfamily. Classic translation factor GTPase family. EF-G/EF-2 subfamily.

It localises to the cytoplasm. Its function is as follows. Catalyzes the GTP-dependent ribosomal translocation step during translation elongation. During this step, the ribosome changes from the pre-translocational (PRE) to the post-translocational (POST) state as the newly formed A-site-bound peptidyl-tRNA and P-site-bound deacylated tRNA move to the P and E sites, respectively. Catalyzes the coordinated movement of the two tRNA molecules, the mRNA and conformational changes in the ribosome. In Coxiella burnetii (strain Dugway 5J108-111), this protein is Elongation factor G.